The primary structure comprises 283 residues: Nucleoid occlusion protein (283 aa).

Residues 148–167 constitute a DNA-binding region (H-T-H motif); it reads EALAQRLGKGQSTIANKLRL.

Belongs to the ParB family.

It localises to the cytoplasm. The protein localises to the nucleoid. Functionally, effects nucleoid occlusion by binding relatively nonspecifically to DNA and preventing the assembly of the division machinery in the vicinity of the nucleoid, especially under conditions that disturb the cell cycle. It helps to coordinate cell division and chromosome segregation by preventing the formation of the Z ring through the nucleoid, which would cause chromosome breakage. In Bacillus licheniformis (strain ATCC 14580 / DSM 13 / JCM 2505 / CCUG 7422 / NBRC 12200 / NCIMB 9375 / NCTC 10341 / NRRL NRS-1264 / Gibson 46), this protein is Nucleoid occlusion protein.